A 40-amino-acid polypeptide reads, in one-letter code: Photosystem II reaction center protein J (40 aa).

Residues 8-28 (IPLWIIGTVAGIPVIGLIGIF) form a helical membrane-spanning segment.

Belongs to the PsbJ family. In terms of assembly, PSII is composed of 1 copy each of membrane proteins PsbA, PsbB, PsbC, PsbD, PsbE, PsbF, PsbH, PsbI, PsbJ, PsbK, PsbL, PsbM, PsbT, PsbX, PsbY, PsbZ, Psb30/Ycf12, at least 3 peripheral proteins of the oxygen-evolving complex and a large number of cofactors. It forms dimeric complexes.

It localises to the plastid. Its subcellular location is the chloroplast thylakoid membrane. One of the components of the core complex of photosystem II (PSII). PSII is a light-driven water:plastoquinone oxidoreductase that uses light energy to abstract electrons from H(2)O, generating O(2) and a proton gradient subsequently used for ATP formation. It consists of a core antenna complex that captures photons, and an electron transfer chain that converts photonic excitation into a charge separation. This is Photosystem II reaction center protein J from Pelargonium hortorum (Common geranium).